The primary structure comprises 76 residues: Bowman-Birk type proteinase inhibitor DE-3 (76 aa).

7 disulfides stabilise this stretch: Cys16/Cys70, Cys17/Cys32, Cys20/Cys66, Cys22/Cys30, Cys40/Cys47, Cys44/Cys59, and Cys49/Cys57.

This sequence belongs to the Bowman-Birk serine protease inhibitor family.

In Macrotyloma axillare (Perennial horse gram), this protein is Bowman-Birk type proteinase inhibitor DE-3.